Consider the following 446-residue polypeptide: N-succinylarginine dihydrolase (446 aa).

Residues 21 to 30 (AGLSWGNVAS), Asn-112, and 139 to 140 (HR) contribute to the substrate site. Residue Glu-176 is part of the active site. Arg-216 contributes to the substrate binding site. His-252 is a catalytic residue. Substrate contacts are provided by Asp-254 and Asn-364. The Nucleophile role is filled by Cys-370.

This sequence belongs to the succinylarginine dihydrolase family. In terms of assembly, homodimer.

The catalysed reaction is N(2)-succinyl-L-arginine + 2 H2O + 2 H(+) = N(2)-succinyl-L-ornithine + 2 NH4(+) + CO2. Its pathway is amino-acid degradation; L-arginine degradation via AST pathway; L-glutamate and succinate from L-arginine: step 2/5. In terms of biological role, catalyzes the hydrolysis of N(2)-succinylarginine into N(2)-succinylornithine, ammonia and CO(2). The chain is N-succinylarginine dihydrolase from Marinobacter nauticus (strain ATCC 700491 / DSM 11845 / VT8) (Marinobacter aquaeolei).